A 482-amino-acid polypeptide reads, in one-letter code: Bifunctional protein GlmU (482 aa).

The tract at residues 1–241 (MTASTEAAVV…SALVTGVNDR (241 aa)) is pyrophosphorylase. Residues 12-15 (LAAG), Lys26, Gln83, 88-89 (GT), 112-114 (SGD), Gly151, Glu166, Asn181, and Asn239 each bind UDP-N-acetyl-alpha-D-glucosamine. A Mg(2+)-binding site is contributed by Asp114. Mg(2+) is bound at residue Asn239. The segment at 242–262 (VQLSDLGKVLNRRIVAAHQRA) is linker. The N-acetyltransferase stretch occupies residues 263–482 (GVTIIDPGST…AARKALGDES (220 aa)). 2 residues coordinate UDP-N-acetyl-alpha-D-glucosamine: Arg344 and Lys362. The active-site Proton acceptor is His374. Positions 377 and 388 each coordinate UDP-N-acetyl-alpha-D-glucosamine. Residues Ala391, 397-398 (NY), Ser416, and Ala434 each bind acetyl-CoA. The tract at residues 463–482 (KKRPGSAADKAARKALGDES) is disordered. Basic and acidic residues predominate over residues 472-482 (KAARKALGDES).

The protein in the N-terminal section; belongs to the N-acetylglucosamine-1-phosphate uridyltransferase family. It in the C-terminal section; belongs to the transferase hexapeptide repeat family. In terms of assembly, homotrimer. Mg(2+) is required as a cofactor.

It is found in the cytoplasm. The catalysed reaction is alpha-D-glucosamine 1-phosphate + acetyl-CoA = N-acetyl-alpha-D-glucosamine 1-phosphate + CoA + H(+). It carries out the reaction N-acetyl-alpha-D-glucosamine 1-phosphate + UTP + H(+) = UDP-N-acetyl-alpha-D-glucosamine + diphosphate. It functions in the pathway nucleotide-sugar biosynthesis; UDP-N-acetyl-alpha-D-glucosamine biosynthesis; N-acetyl-alpha-D-glucosamine 1-phosphate from alpha-D-glucosamine 6-phosphate (route II): step 2/2. It participates in nucleotide-sugar biosynthesis; UDP-N-acetyl-alpha-D-glucosamine biosynthesis; UDP-N-acetyl-alpha-D-glucosamine from N-acetyl-alpha-D-glucosamine 1-phosphate: step 1/1. The protein operates within bacterial outer membrane biogenesis; LPS lipid A biosynthesis. Its function is as follows. Catalyzes the last two sequential reactions in the de novo biosynthetic pathway for UDP-N-acetylglucosamine (UDP-GlcNAc). The C-terminal domain catalyzes the transfer of acetyl group from acetyl coenzyme A to glucosamine-1-phosphate (GlcN-1-P) to produce N-acetylglucosamine-1-phosphate (GlcNAc-1-P), which is converted into UDP-GlcNAc by the transfer of uridine 5-monophosphate (from uridine 5-triphosphate), a reaction catalyzed by the N-terminal domain. This Mycolicibacterium smegmatis (strain ATCC 700084 / mc(2)155) (Mycobacterium smegmatis) protein is Bifunctional protein GlmU.